The following is a 473-amino-acid chain: MTTTGSTPPRKNRSNVTGGEGGSLEEYAWRAAGEAAAAKKATRAWGVSVSLRSHFSSLVLLLLLLLVALAVSATTKNGDPAETPHAPPLPPPASIKLPSSSSSGGGECDLFSGRWVYDEAAYPLYRESACRVMSEQSACEKYGRTDLRYQHWRWQPHGCDLPRFDAEKFLGKLRNKRLVFVGDSLNRNQWASMLCLIDTGAPELHTSINSSRSLTTFKIHEYNASVDFYWSPLLVESNSDHPLRHRVADRTVRAASINKHAAHWTNADVLVFNSYLWWQRPAMKVLWGSFDNPAAVVAAAAEEGDEYAVSKVIDSLRAYELAVRTWADWMEFHVDRARTQLFFMTMSPTHLRSDEWEDAAAAAAGGNHGCYGETEPIAAEEYRGTSGTDMAFARAVEAEARRLGERSVAVRLINVTRLSERRKDAHPSVHRRYWDPVTDEQRRNPSSYADCIHWCLPGVPDVWNQLLYAHIVS.

Positions 1–17 are enriched in polar residues; sequence MTTTGSTPPRKNRSNVT. The tract at residues 1–22 is disordered; the sequence is MTTTGSTPPRKNRSNVTGGEGG. Residues 1–54 lie on the Cytoplasmic side of the membrane; the sequence is MTTTGSTPPRKNRSNVTGGEGGSLEEYAWRAAGEAAAAKKATRAWGVSVSLRSH. Residues 55 to 75 traverse the membrane as a helical; Signal-anchor for type II membrane protein segment; that stretch reads FSSLVLLLLLLLVALAVSATT. The interval 76–101 is disordered; the sequence is KNGDPAETPHAPPLPPPASIKLPSSS. At 76–473 the chain is on the lumenal side; it reads KNGDPAETPH…NQLLYAHIVS (398 aa). 4 disulfide bridges follow: C108–C159, C130–C195, C139–C455, and C370–C451. Positions 182 to 184 match the GDS motif motif; that stretch reads GDS. The active-site Nucleophile is S184. N-linked (GlcNAc...) asparagine glycosylation is found at N209, N223, and N414. D450 serves as the catalytic Proton donor. Positions 450–453 match the DXXH motif motif; the sequence is DCIH. The active-site Proton acceptor is H453.

This sequence belongs to the PC-esterase family. TBL subfamily.

Its subcellular location is the golgi apparatus membrane. Its function is as follows. Xylan acetyltransferase required for 2-O- and 3-O-monoacetylation of xylosyl residues in xylan. Catalyzes the 2-O-acetylation of xylan, followed by nonenzymatic acetyl migration to the O-3 position, resulting in products that are monoacetylated at both O-2 and O-3 positions. The protein is Xylan O-acetyltransferase 14 of Oryza sativa subsp. japonica (Rice).